Reading from the N-terminus, the 383-residue chain is MDRTCEERPAEDGSDEEDPDSMEAPTRIRDTPEDIVLEAPASGLAFHPARDLLAAGDVDGDVFVFSYSCQEGETKELWSSGHHLKACRAVAFSEDGQKLITVSKDKAIHVLDVEQGQLERRVSKAHGAPINSLLLVDENVLATGDDTGGICLWDQRKEGPLMDMRQHEEYIADMALDPAKKLLLTASGDGCLGIFNIKRRRFELLSEPQSGDLTSVTLMKWGKKVACGSSEGTIYLFNWNGFGATSDRFALRAESIDCMVPVTESLLCTGSTDGVIRAVNILPNRVVGSVGQHTGEPVEELALSHCGRFLASSGHDQRLKFWDMAQLRAVVVDDYRRRKKKGGPLRALSSKTWSTDDFFAGLREEGEDSMAQEEKEETGDDSD.

Residues 1 to 11 (MDRTCEERPAE) are compositionally biased toward basic and acidic residues. Residues 1-33 (MDRTCEERPAEDGSDEEDPDSMEAPTRIRDTPE) are disordered. Acidic residues predominate over residues 12-21 (DGSDEEDPDS). Ser14 bears the Phosphoserine mark. WD repeat units follow at residues 36–75 (VLEA…GETK), 82–121 (HHLK…LERR), 125–163 (AHGA…PLMD), 166–205 (QHEE…FELL), 208–247 (PQSG…ATSD), 250–289 (ALRA…VVGS), and 293–332 (HTGE…AVVV). The residue at position 354 (Ser354) is a Phosphoserine. Positions 363–383 (REEGEDSMAQEEKEETGDDSD) are disordered. Positions 365–383 (EGEDSMAQEEKEETGDDSD) are enriched in acidic residues. Position 378 is a phosphothreonine (Thr378). Ser382 carries the post-translational modification Phosphoserine.

The protein belongs to the WD repeat WDR55 family.

It localises to the nucleus. It is found in the nucleolus. The protein localises to the cytoplasm. Its function is as follows. Nucleolar protein that acts as a modulator of rRNA synthesis. Plays a central role during organogenesis. The polypeptide is WD repeat-containing protein 55 (WDR55) (Homo sapiens (Human)).